Reading from the N-terminus, the 391-residue chain is S-adenosylmethionine synthase 5 (391 aa).

Glu9 contacts Mg(2+). His15 contributes to the ATP binding site. Glu43 contributes to the K(+) binding site. 2 residues coordinate L-methionine: Glu56 and Gln99. Residues 167–169 (DGK), 235–238 (SGRF), Asp246, 252–253 (RK), Ala269, Lys273, and Lys277 each bind ATP. L-methionine is bound at residue Asp246. Residue Lys277 coordinates L-methionine.

The protein belongs to the AdoMet synthase family. As to quaternary structure, homotetramer. The cofactor is Mn(2+). Mg(2+) is required as a cofactor. Co(2+) serves as cofactor. It depends on K(+) as a cofactor.

It localises to the cytoplasm. It carries out the reaction L-methionine + ATP + H2O = S-adenosyl-L-methionine + phosphate + diphosphate. Its pathway is amino-acid biosynthesis; S-adenosyl-L-methionine biosynthesis; S-adenosyl-L-methionine from L-methionine: step 1/1. Functionally, catalyzes the formation of S-adenosylmethionine from methionine and ATP. The reaction comprises two steps that are both catalyzed by the same enzyme: formation of S-adenosylmethionine (AdoMet) and triphosphate, and subsequent hydrolysis of the triphosphate. The protein is S-adenosylmethionine synthase 5 (METK5) of Vitis vinifera (Grape).